A 702-amino-acid polypeptide reads, in one-letter code: Zinc finger CCCH domain-containing protein 62 (702 aa).

The interval 1-77 (MAAPAADDDD…SYDDPTFDPA (77 aa)) is disordered. A compositionally biased stretch (acidic residues) spans 18 to 54 (EEDDGEEEEGSEEEVESDDEEEEEGEGYDWSEEDDPE). Residues 132–166 (LEKLKVYECKAYLRMHKLRLSGNKEVLLTRIRGQI) form the SAP domain. Disordered stretches follow at residues 288 to 349 (EKHA…NTVQ), 405 to 532 (SRTS…QQQP), 546 to 602 (GGTS…RETH), and 634 to 673 (QMSQ…NPQR). Basic and acidic residues predominate over residues 298–325 (KTREVRIKDKENERMRRLNRNKENKSKG). Polar residues-rich tracts occupy residues 326-349 (QDNM…NTVQ) and 405-419 (SRTS…QAPS). Low complexity predominate over residues 430–448 (QQQQQQQPPKSIKPAPIQQ). 4 stretches are compositionally biased toward polar residues: residues 472-502 (SQEQ…QHGG), 522-532 (QQAVSYTQQQP), 546-565 (GGTS…NWGS), and 575-591 (PFTQ…NGSG). The C3H1-type zinc finger occupies 674–702 (FRPWKPCFIYQQQGWCPYGENCKFMHDLR).

In Oryza sativa subsp. japonica (Rice), this protein is Zinc finger CCCH domain-containing protein 62.